A 397-amino-acid polypeptide reads, in one-letter code: DNA excision repair protein ERCC-8 (397 aa).

WD repeat units follow at residues 41–81 (IHCS…RQPY), 97–137 (VHKY…IADV), 184–224 (GHRQ…GCLI), 243–282 (AHNG…NTLV), and 332–371 (GHYK…SVPD). The disordered stretch occupies residues 370-397 (PDDDDETSTRSQLNPAFEDAWSSSDEEG). Phosphoserine occurs at positions 391, 392, and 393.

In terms of assembly, part of the CSA complex (also named DCX(ERCC8) complex), a DCX E3 ubiquitin-protein ligase complex containing ERCC8, RBX1, DDB1 and CUL4A; the CSA complex interacts with RNA polymerase II; upon UV irradiation it interacts with the COP9 signalosome and preferentially with the hyperphosphorylated form of RNA polymerase II. Interacts with ERCC6/CSB (via CIM motif); promoting recruitment to lesion-stalled RNA polymerase II (Pol II). Interacts with KIAA1530/UVSSA. Interacts with a subunit of RNA polymerase II TFIIH.

The protein localises to the nucleus. The protein resides in the chromosome. Its subcellular location is the nucleus matrix. Its pathway is protein modification; protein ubiquitination. Substrate-recognition component of the CSA complex, a DCX (DDB1-CUL4-X-box) E3 ubiquitin-protein ligase complex, involved in transcription-coupled nucleotide excision repair (TC-NER), a process during which RNA polymerase II-blocking lesions are rapidly removed from the transcribed strand of active genes. Following recruitment to lesion-stalled RNA polymerase II (Pol II), the CSA complex mediates ubiquitination of Pol II subunit POLR2A/RPB1 at 'Lys-1268', a critical TC-NER checkpoint, governing RNA Pol II stability and initiating DNA damage excision by TFIIH recruitment. The CSA complex also promotes the ubiquitination and subsequent proteasomal degradation of ERCC6/CSB in a UV-dependent manner; ERCC6 degradation is essential for the recovery of RNA synthesis after transcription-coupled repair. Also plays a role in DNA double-strand breaks (DSSBs) repair by non-homologous end joining (NHEJ). In Bos taurus (Bovine), this protein is DNA excision repair protein ERCC-8 (ERCC8).